A 66-amino-acid chain; its full sequence is uncharacterized protein (66 aa).

The chain crosses the membrane as a helical span at residues 11-31; the sequence is PFPLLGVWIIVIIIVAVIGLL.

It is found in the membrane. This is an uncharacterized protein from Chenopodium amaranticolor (Quinoa).